A 158-amino-acid chain; its full sequence is Snaclec jerdonuxin subunit alpha (158 aa).

An N-terminal signal peptide occupies residues M1–A23. 3 cysteine pairs are disulfide-bonded: C27–C38, C55–C152, and C127–C144. The region spanning Y34–K153 is the C-type lectin domain.

Belongs to the snaclec family. In terms of assembly, tetramer of 4 heterodimers of alpha and beta subunits; disulfide-linked. Expressed by the venom gland.

It is found in the secreted. Snaclec that strongly induces platelet aggregation, in a dose-dependent manner. This is Snaclec jerdonuxin subunit alpha from Protobothrops jerdonii (Jerdon's pitviper).